Reading from the N-terminus, the 424-residue chain is Histidine--tRNA ligase (424 aa).

This sequence belongs to the class-II aminoacyl-tRNA synthetase family. Homodimer.

The protein resides in the cytoplasm. The enzyme catalyses tRNA(His) + L-histidine + ATP = L-histidyl-tRNA(His) + AMP + diphosphate + H(+). The chain is Histidine--tRNA ligase from Shewanella pealeana (strain ATCC 700345 / ANG-SQ1).